Reading from the N-terminus, the 303-residue chain is Aspartate carbamoyltransferase catalytic subunit (303 aa).

Carbamoyl phosphate is bound by residues R51 and T52. K80 provides a ligand contact to L-aspartate. Positions 101, 129, and 132 each coordinate carbamoyl phosphate. L-aspartate contacts are provided by R162 and R221. Residues L260 and P261 each contribute to the carbamoyl phosphate site.

Belongs to the aspartate/ornithine carbamoyltransferase superfamily. ATCase family. As to quaternary structure, heterooligomer of catalytic and regulatory chains.

The catalysed reaction is carbamoyl phosphate + L-aspartate = N-carbamoyl-L-aspartate + phosphate + H(+). Its pathway is pyrimidine metabolism; UMP biosynthesis via de novo pathway; (S)-dihydroorotate from bicarbonate: step 2/3. Functionally, catalyzes the condensation of carbamoyl phosphate and aspartate to form carbamoyl aspartate and inorganic phosphate, the committed step in the de novo pyrimidine nucleotide biosynthesis pathway. This chain is Aspartate carbamoyltransferase catalytic subunit, found in Saccharolobus solfataricus (strain ATCC 35092 / DSM 1617 / JCM 11322 / P2) (Sulfolobus solfataricus).